The sequence spans 197 residues: Peptidyl-tRNA hydrolase (197 aa).

Tyrosine 23 is a tRNA binding site. Histidine 28 functions as the Proton acceptor in the catalytic mechanism. The tRNA site is built by phenylalanine 73, asparagine 75, and asparagine 121.

This sequence belongs to the PTH family. Monomer.

The protein resides in the cytoplasm. It carries out the reaction an N-acyl-L-alpha-aminoacyl-tRNA + H2O = an N-acyl-L-amino acid + a tRNA + H(+). Hydrolyzes ribosome-free peptidyl-tRNAs (with 1 or more amino acids incorporated), which drop off the ribosome during protein synthesis, or as a result of ribosome stalling. Its function is as follows. Catalyzes the release of premature peptidyl moieties from peptidyl-tRNA molecules trapped in stalled 50S ribosomal subunits, and thus maintains levels of free tRNAs and 50S ribosomes. This is Peptidyl-tRNA hydrolase from Frankia alni (strain DSM 45986 / CECT 9034 / ACN14a).